Reading from the N-terminus, the 145-residue chain is Deoxyuridine 5'-triphosphate nucleotidohydrolase (145 aa).

Substrate contacts are provided by residues 62–64 (RSG), Asn75, 79–81 (TVD), and Lys89.

The protein belongs to the dUTPase family. It depends on Mg(2+) as a cofactor.

It carries out the reaction dUTP + H2O = dUMP + diphosphate + H(+). It participates in pyrimidine metabolism; dUMP biosynthesis; dUMP from dCTP (dUTP route): step 2/2. This enzyme is involved in nucleotide metabolism: it produces dUMP, the immediate precursor of thymidine nucleotides and it decreases the intracellular concentration of dUTP so that uracil cannot be incorporated into DNA. This Helicobacter pylori (strain P12) protein is Deoxyuridine 5'-triphosphate nucleotidohydrolase.